The following is a 30-amino-acid chain: uncharacterized protein (30 aa).

This is an uncharacterized protein from Dictyostelium discoideum (Social amoeba).